The primary structure comprises 218 residues: tRNA (guanosine(18)-2'-O)-methyltransferase (218 aa).

Positions 111 and 154 each coordinate S-adenosyl-L-methionine.

Belongs to the class IV-like SAM-binding methyltransferase superfamily. RNA methyltransferase TrmH family.

It carries out the reaction guanosine(18) in tRNA + S-adenosyl-L-methionine = 2'-O-methylguanosine(18) in tRNA + S-adenosyl-L-homocysteine + H(+). Its function is as follows. Catalyzes the 2'-O methylation of guanosine at position 18 in tRNA. The sequence is that of tRNA (guanosine(18)-2'-O)-methyltransferase from Borreliella burgdorferi (strain ATCC 35210 / DSM 4680 / CIP 102532 / B31) (Borrelia burgdorferi).